A 187-amino-acid chain; its full sequence is Segregation and condensation protein B (187 aa).

This sequence belongs to the ScpB family. As to quaternary structure, homodimer. Homodimerization may be required to stabilize the binding of ScpA to the Smc head domains. Component of a cohesin-like complex composed of ScpA, ScpB and the Smc homodimer, in which ScpA and ScpB bind to the head domain of Smc. The presence of the three proteins is required for the association of the complex with DNA.

It localises to the cytoplasm. In terms of biological role, participates in chromosomal partition during cell division. May act via the formation of a condensin-like complex containing Smc and ScpA that pull DNA away from mid-cell into both cell halves. In Agathobacter rectalis (strain ATCC 33656 / DSM 3377 / JCM 17463 / KCTC 5835 / VPI 0990) (Eubacterium rectale), this protein is Segregation and condensation protein B.